Reading from the N-terminus, the 33-residue chain is MPTITIISYFGLLLASIIFTLVLFISLSKIQLI.

Residues I4–F24 form a helical membrane-spanning segment.

Belongs to the PetL family. In terms of assembly, the 4 large subunits of the cytochrome b6-f complex are cytochrome b6, subunit IV (17 kDa polypeptide, PetD), cytochrome f and the Rieske protein, while the 4 small subunits are PetG, PetL, PetM and PetN. The complex functions as a dimer.

It is found in the plastid. The protein resides in the chloroplast thylakoid membrane. Functionally, component of the cytochrome b6-f complex, which mediates electron transfer between photosystem II (PSII) and photosystem I (PSI), cyclic electron flow around PSI, and state transitions. PetL is important for photoautotrophic growth as well as for electron transfer efficiency and stability of the cytochrome b6-f complex. The polypeptide is Cytochrome b6-f complex subunit 6 (Pinus mugo (Dwarf mountain pine)).